Consider the following 210-residue polypeptide: Probable glutathione S-transferase gst-36 (210 aa).

In terms of domain architecture, GST N-terminal spans 2–79; that stretch reads PHFKFYYFDV…YLGHQFHRAG (78 aa). Glutathione is bound by residues tyrosine 8, tryptophan 39, lysine 43, 49–51, and 63–64; these read GQV and QT. The GST C-terminal domain maps to 81–210; sequence NAVDCARLDM…YVSQRKATPA (130 aa).

This sequence belongs to the GST superfamily. Sigma family.

It carries out the reaction RX + glutathione = an S-substituted glutathione + a halide anion + H(+). Conjugation of reduced glutathione to a wide number of exogenous and endogenous hydrophobic electrophiles. The protein is Probable glutathione S-transferase gst-36 (gst-36) of Caenorhabditis elegans.